A 719-amino-acid polypeptide reads, in one-letter code: Potassium channel KOR2 (719 aa).

The Cytoplasmic segment spans residues 1 to 63; it reads MAEEYELNEI…VIHPNGRWYR (63 aa). A helical membrane pass occupies residues 64–84; sequence IWANMMFLWSIYSTFFTPFEF. Topologically, residues 85–93 are extracellular; sequence SFFRGLPDQ. A helical membrane pass occupies residues 94–114; it reads LLDLECVQLVFLADVAVHFFL. At 115 to 137 the chain is on the cytoplasmic side; the sequence is AYRDPHTYRMVHDKRHIALRYIK. A helical transmembrane segment spans residues 138 to 158; sequence GSFALDVLGCFPWDAIYKVTG. Topologically, residues 159-164 are extracellular; that stretch reads RVEAVR. A helical; Voltage-sensor membrane pass occupies residues 165–185; it reads WLVWVRLYRGRKVMAFFKRVE. Over 186-199 the chain is Cytoplasmic; it reads KDIRVSYLLTRIVK. A helical transmembrane segment spans residues 200–220; that stretch reads LITVELYCTHTAACGFYYLAT. The Extracellular segment spans residues 221–255; it reads TLPPAREGGTWIGSLSLGDARYINFREVDLLTRYV. Residues 256-275 constitute an intramembrane region (pore-forming); the sequence is TSLYLAIVTMATVGYGDIHA. Residues 276 to 285 are Extracellular-facing; sequence VNTREMAFTV. The helical transmembrane segment at 286–306 threads the bilayer; it reads VYISFSIVLSAYLIGNMTALI. The Cytoplasmic segment spans residues 307–719; it reads VKGSRTERFR…LEQARTVATN (413 aa). 383-503 contacts a nucleoside 3',5'-cyclic phosphate; sequence LFRGCSDDFL…SQILSNLLKG (121 aa). ANK repeat units lie at residues 523 to 556, 560 to 589, 593 to 622, 624 to 653, and 657 to 686; these read KQES…DPSK, DGRT…NVNS, FGNS…ILNL, DAGG…SPNC, and DQRT…DIQA.

The protein belongs to the potassium channel family. Plant (TC 1.A.1.4) subfamily.

The protein localises to the membrane. Probable outward-rectifying potassium channel. The chain is Potassium channel KOR2 from Oryza sativa subsp. japonica (Rice).